The following is a 264-amino-acid chain: Carbonic anhydrase (264 aa).

Positions 1 to 33 form a signal peptide, tat-type signal; it reads MSSTLYRRQLLKLLGMSVLGTSFSSCVTSPARA. In terms of domain architecture, Alpha-carbonic anhydrase spans 36–264; that stretch reads VNWGYIGKVG…LNDRLVIEAI (229 aa). Zn(2+) contacts are provided by His127, His129, and His146. A substrate-binding site is contributed by 214 to 215; the sequence is TT.

The protein belongs to the alpha-carbonic anhydrase family. It depends on Zn(2+) as a cofactor. In terms of processing, predicted to be exported by the Tat system. The position of the signal peptide cleavage has not been experimentally proven.

It carries out the reaction hydrogencarbonate + H(+) = CO2 + H2O. Reversible hydration of carbon dioxide. This is Carbonic anhydrase (ecaA) from Nostoc sp. (strain PCC 7120 / SAG 25.82 / UTEX 2576).